A 258-amino-acid polypeptide reads, in one-letter code: Acyl-[acyl-carrier-protein]--UDP-N-acetylglucosamine O-acyltransferase (258 aa).

The protein belongs to the transferase hexapeptide repeat family. LpxA subfamily. Homotrimer.

The protein localises to the cytoplasm. It catalyses the reaction a (3R)-hydroxyacyl-[ACP] + UDP-N-acetyl-alpha-D-glucosamine = a UDP-3-O-[(3R)-3-hydroxyacyl]-N-acetyl-alpha-D-glucosamine + holo-[ACP]. Its pathway is glycolipid biosynthesis; lipid IV(A) biosynthesis; lipid IV(A) from (3R)-3-hydroxytetradecanoyl-[acyl-carrier-protein] and UDP-N-acetyl-alpha-D-glucosamine: step 1/6. In terms of biological role, involved in the biosynthesis of lipid A, a phosphorylated glycolipid that anchors the lipopolysaccharide to the outer membrane of the cell. This chain is Acyl-[acyl-carrier-protein]--UDP-N-acetylglucosamine O-acyltransferase, found in Azotobacter vinelandii (strain DJ / ATCC BAA-1303).